The following is a 424-amino-acid chain: UPF0415 protein C7orf25 homolog (424 aa).

Belongs to the UPF0415 family.

The sequence is that of UPF0415 protein C7orf25 homolog from Xenopus tropicalis (Western clawed frog).